The chain runs to 1745 residues: MVDFPYSSAPLRTIKEVQFGLFSPEEVRAISVAKIEFPETMDETQMRAKVGGLNDPRLGSIDRNFKCQTCGEGMNDCPGHFGHIELAKPVFHIGFISKIKKVCECVCMHCGKLLLDEYNELMRQAIKIKDPKRRFNAVWSLCKAKMVCDTEVPSEDDPSKYISRGGCGNAQPSIRKDGLSLVGTWKKDKNAEDADQPEKRIISAEEILNVFKHISPEDSWRLGFNEDFSRPEWMLLTVLPVPPPPVRPSISFNESQRGEDDLTYKLGDILKANINVQRLEINGSPQHVIQESESLLQFHVATYMDNDIAGQPQAVQKSGRPIKSIRARLKGKEGRIRGNLMGKRVDFSARTVISGDPNLDLDQVGVPKSIAKTLTYPEVVTPYNIDRLTQLVRNGPNEHPGAKYVIRDNGDRIDLRYSKRAGDIQLQYGWKVERHIMDDDPVLFNRQPSLHKMSMMAHRVKVMPYSTFRLNLSVTSPYNADFDGDEMNLHVPQSEETRAELSQLCAVPLQIVSPQSNKPCMGIVQDTLCGIRKMTLRDTFIELDQVLNMLYWIPDWDGVIPTPTILKPKPLWSGKQLLSMAIPSGIHLQRFDEGTTYLSPKDNGMLIIDGQIIFGVVDKKTVGSSSGGLIHVVTREKGPEVCAKLFGNIQKVVNYWLLHNGFSIGIGDTIADEKTMREITDAIALAKKKVEEVTKEAQANLLTAKHGMTLRESFEDNVVRYLNEARDKAGRSAEVNLKDLNNVKQMVSAGSKGSFINIAQMSACVGQQSVEGKRIAFGFADRTLPHFSKDDYSPESKGFVENSYLRGLTPQEFFFHAMGGREGLIDTAVKTAETGYIQRRLVKALEDIMVHYDGTTRNSLGNIIQFVYGEDGMDAAHIEKQSIDTIPGSDLAFEKRYRIDLLNPNYALDPNLLESGTEIVGDLKLQNLLDEEYKQLVQDRHFLRKIFMDGEHNWPLPVNIRRIIQNAQQTFRIDSTKPTDLSIQDVVQGVRGLQERLLVLRGKSQILQEAQENAITLFCCLLRSRLATRRVITEYRLTKQTFEWVLNNIEAQFLRSIVHPGEMVGVLAAQSIGEPATQMTLNTFHFAGVASKKVTSGVPRLKEILNVAKNMKTPSLTVYLEESYATDQEKAKLIRSAIEHTTLKSVTVASEIYYDPDPSSTVIEEDEEIIQLHFSLMDEETEASLKHQSPWLLRLELDRVAMTDKDLTMGQVGEKIKETFKNDLFVIWSEDNAEKLIIRCRVVRDPKTLDAEAEAEEDHMLKKIENTMLESITLRGVQDITRVVMMKYDRKVPSETGEYHKIPEWVLETDGVNLSEVMSVPGVDPTRIYTNSFIDIMNVLGIEAGRAALYKEVYNVIASDGSYVNYRHMALLVDVMTSQGFLMSVTRHGFNRADTGALMRCSFEETVEILFEAGAAAELDDCSGVSENVILGQMAPIGTGSFDVMIDDESLIKYMPEQKLSTAVEVNDGGATPYNSDAGLVNTKVDIKDELMFSPLVEAGTSDAIASGGFTAYGGADYGGATSPFSGYGNGPTSPGFGDVSSPGFSPTSPAYSPTSPSYSPTSPSYSPTSPSYSPTSPSYSPTSPSYSPTSPSYSPTSPSYSPTSPSYSPTSPSYSPTSPSYSPTSPSYSPTSPSYSPTSPSYSPTSPSYSPTSPSYSPTSPSYSPTSPSYSPTSPSYSPTSPSYSPTSPSYSPTSPSYSPTSPSYSPTSPSYSPTSPQYSPRSPSYSPSFNNNDKEQKDENGTH.

8 residues coordinate Zn(2+): cysteine 67, cysteine 70, cysteine 77, histidine 80, cysteine 107, cysteine 110, cysteine 148, and cysteine 167. Aspartate 481, aspartate 483, and aspartate 485 together coordinate Mg(2+). Positions proline 810–glutamate 822 are bridging helix. Lysine 1247 participates in a covalent cross-link: Glycyl lysine isopeptide (Lys-Gly) (interchain with G-Cter in ubiquitin). A disordered region spans residues asparagine 1530–histidine 1745. The segment covering serine 1546–serine 1730 has biased composition (low complexity). A run of 24 repeats spans residues tyrosine 1552–serine 1558, tyrosine 1559–serine 1565, tyrosine 1566–serine 1572, tyrosine 1573–serine 1579, tyrosine 1580–serine 1586, tyrosine 1587–serine 1593, tyrosine 1594–serine 1600, tyrosine 1601–serine 1607, tyrosine 1608–serine 1614, tyrosine 1615–serine 1621, tyrosine 1622–serine 1628, tyrosine 1629–serine 1635, tyrosine 1636–serine 1642, tyrosine 1643–serine 1649, tyrosine 1650–serine 1656, tyrosine 1657–serine 1663, tyrosine 1664–serine 1670, tyrosine 1671–serine 1677, tyrosine 1678–serine 1684, tyrosine 1685–serine 1691, tyrosine 1692–serine 1698, tyrosine 1699–serine 1705, tyrosine 1706–serine 1712, and tyrosine 1713–glutamine 1719. A C-terminal domain (CTD); 25 X 7 AA approximate tandem repeats of Y-S-P-T-S-P-[TSAN] region spans residues tyrosine 1552 to serine 1726. The stretch at tyrosine 1720–serine 1726 is one 25; approximate repeat. A compositionally biased stretch (basic and acidic residues) spans asparagine 1734–histidine 1745.

The protein belongs to the RNA polymerase beta' chain family. Component of the RNA polymerase II (Pol II) complex consisting of 12 subunits. Post-translationally, the tandem 7 residues repeats in the C-terminal domain (CTD) can be highly phosphorylated. The phosphorylation activates Pol II. Phosphorylation occurs mainly at residues 'Ser-2' and 'Ser-5' of the heptapeptide repeat. The phosphorylation state is believed to result from the balanced action of site-specific CTD kinases and phosphatase, and a 'CTD code' that specifies the position of Pol II within the transcription cycle has been proposed. In terms of processing, following transcription stress, the elongating form of RNA polymerase II (RNA pol IIo) is polyubiquitinated via 'Lys-63'-linkages on Lys-1247 at DNA damage sites without leading to degradation: ubiquitination promotes RNA pol IIo backtracking to allow access by the transcription-coupled nucleotide excision repair (TC-NER) machinery. Subsequent DEF1-dependent polyubiquitination by the elongin complex via 'Lys-48'-linkages may lead to proteasome-mediated degradation; presumably at stalled RNA pol II where TC-NER has failed, to halt global transcription and enable 'last resort' DNA repair pathways.

It is found in the nucleus. The enzyme catalyses RNA(n) + a ribonucleoside 5'-triphosphate = RNA(n+1) + diphosphate. DNA-dependent RNA polymerase catalyzes the transcription of DNA into RNA using the four ribonucleoside triphosphates as substrates. Largest and catalytic component of RNA polymerase II which synthesizes mRNA precursors and many functional non-coding RNAs. Forms the polymerase active center together with the second largest subunit. Pol II is the central component of the basal RNA polymerase II transcription machinery. It is composed of mobile elements that move relative to each other. RPB1 is part of the core element with the central large cleft, the clamp element that moves to open and close the cleft and the jaws that are thought to grab the incoming DNA template. At the start of transcription, a single-stranded DNA template strand of the promoter is positioned within the central active site cleft of Pol II. A bridging helix emanates from RPB1 and crosses the cleft near the catalytic site and is thought to promote translocation of Pol II by acting as a ratchet that moves the RNA-DNA hybrid through the active site by switching from straight to bent conformations at each step of nucleotide addition. During transcription elongation, Pol II moves on the template as the transcript elongates. Elongation is influenced by the phosphorylation status of the C-terminal domain (CTD) of Pol II largest subunit (RPB1), which serves as a platform for assembly of factors that regulate transcription initiation, elongation, termination and mRNA processing. This is DNA-directed RNA polymerase II subunit RPB1 (RPB1) from Eremothecium gossypii (strain ATCC 10895 / CBS 109.51 / FGSC 9923 / NRRL Y-1056) (Yeast).